The primary structure comprises 609 residues: Glutamine--fructose-6-phosphate aminotransferase [isomerizing] (609 aa).

Residue Cys-2 is the Nucleophile; for GATase activity of the active site. The Glutamine amidotransferase type-2 domain maps to 2-218; the sequence is CGIVGAIAQR…EGDIAEITRR (217 aa). SIS domains lie at 286–426 and 458–599; these read ADEL…LKGL and LAED…VDQP. The active-site For Fru-6P isomerization activity is Lys-604.

In terms of assembly, homodimer.

Its subcellular location is the cytoplasm. It carries out the reaction D-fructose 6-phosphate + L-glutamine = D-glucosamine 6-phosphate + L-glutamate. In terms of biological role, catalyzes the first step in hexosamine metabolism, converting fructose-6P into glucosamine-6P using glutamine as a nitrogen source. The protein is Glutamine--fructose-6-phosphate aminotransferase [isomerizing] of Escherichia coli O6:H1 (strain CFT073 / ATCC 700928 / UPEC).